The chain runs to 121 residues: Large ribosomal subunit protein bL19 (121 aa).

This sequence belongs to the bacterial ribosomal protein bL19 family.

Functionally, this protein is located at the 30S-50S ribosomal subunit interface and may play a role in the structure and function of the aminoacyl-tRNA binding site. The sequence is that of Large ribosomal subunit protein bL19 from Chlorobium phaeobacteroides (strain BS1).